A 21-amino-acid chain; its full sequence is Preblooming protein 2 (21 aa).

In terms of biological role, possible mediator for cell division in the blooming process. This chain is Preblooming protein 2, found in Prorocentrum triestinum (Red tide alga).